A 602-amino-acid polypeptide reads, in one-letter code: Raftlin (602 aa).

The N-myristoyl glycine moiety is linked to residue G2. C3 carries S-palmitoyl cysteine lipidation. The segment covering 178–195 (TPASNNSVQSRDNKNVSN) has biased composition (polar residues). Disordered stretches follow at residues 178 to 282 (TPAS…RCSK), 451 to 495 (KKES…EVTE), and 524 to 567 (NETA…QSAP). Basic and acidic residues-rich tracts occupy residues 197–209 (PEDHASLDGEKID) and 244–265 (PDCKSAKGSKEQHEHPGGREAP). Residues 468–477 (KPMKKSRKTK) are compositionally biased toward basic residues.

The protein belongs to the raftlin family.

It localises to the cell membrane. In terms of biological role, may play a pivotal role in the formation and/or maintenance of lipid rafts. May regulate B-cell antigen receptor-mediated signaling. This chain is Raftlin (RFTN1), found in Gallus gallus (Chicken).